A 464-amino-acid chain; its full sequence is MPIRAYCTICSDFFDNARDVAAITCGHTFHQECLLQWFHSAPHRTCPQCRIQVSSRQIINKLFFDIGGEEETVLDAESLKNEVDRIKASLLVKEKEKRECQGLVDSLREMLDVRNVTIQSQQKELGDMEMLCSTLKKQIKFLDKQQSETKAAKDEARKLRNKLKTMESIEVLLQSQRSEVEEMIRDMGSGQAAVEQLAIYCVSLKKEYENLKEVRKSSAEMTEKLRKELFSSNHKAQKAELELTKVREELSASQKELHSADKEIMSLKKKVEFLQKTLTTPTASNEAISRLIFESPAPIGLERPKLRPPMMGNDINLDVTFDIDTPEHNTQKSVVAPFKKMKFDNKEHPLSSPTKNPLQESKGLMSWAGGRTGADEDDDLTLPSFIKNSLLHKKPVGSLLGLRQNTGAVRTGFDGLGGRTKFIQPSNLTEIRPLHQKMKRKKVSRPTACTSSLANQPRLEDFLK.

An RING-type; atypical zinc finger spans residues cysteine 7 to arginine 50. Coiled coils occupy residues leucine 142–aspartate 186 and alanine 236–threonine 277. The tract at residues lysine 439–lysine 464 is disordered. Positions glutamine 456–lysine 464 match the PIP-box motif.

The protein belongs to the TRAIP family.

It localises to the nucleus. It is found in the nucleoplasm. The protein resides in the nucleolus. Its subcellular location is the chromosome. The protein localises to the cytoplasm. The enzyme catalyses S-ubiquitinyl-[E2 ubiquitin-conjugating enzyme]-L-cysteine + [acceptor protein]-L-lysine = [E2 ubiquitin-conjugating enzyme]-L-cysteine + N(6)-ubiquitinyl-[acceptor protein]-L-lysine.. The protein operates within protein modification; protein ubiquitination. Its function is as follows. E3 ubiquitin ligase required to protect genome stability in response to replication stress. Acts as a key regulator of interstrand cross-link repair, which takes place when both strands of duplex DNA are covalently tethered together, thereby blocking replication and transcription. Controls the choice between the two pathways of replication-coupled interstrand-cross-link repair by mediating ubiquitination of mcm7 subunit of the CMG helicase complex. Short ubiquitin chains on mcm7 promote recruitment of DNA glycosylase neil3. If the interstrand cross-link cannot be cleaved by neil3, the ubiquitin chains continue to grow on mcm7, promoting the unloading of the CMG helicase complex by the vcp/p97 ATPase, enabling the Fanconi anemia DNA repair pathway. Only catalyzes ubiquitination of mcm7 when forks converge. Also involved in the repair of covalent DNA-protein cross-links (DPCs) during DNA synthesis: promotes ubiquitination of DPCs, leading to their degradation by the proteasome. Also acts as a negative regulator of innate immune signaling by inhibiting activation of NF-kappa-B mediated by TNF. This Xenopus laevis (African clawed frog) protein is E3 ubiquitin-protein ligase TRAIP.